The chain runs to 255 residues: Protein C activator (255 aa).

Residues 1 to 18 (MVLIRVLANLLILHLSYA) form the signal peptide. A propeptide spanning residues 19–24 (QKSSEL) is cleaved from the precursor. The region spanning 25-246 (VIGGDECNIN…YTDWIQSIIS (222 aa)) is the Peptidase S1 domain. 6 disulfide bridges follow: Cys31–Cys162, Cys49–Cys65, Cys97–Cys253, Cys141–Cys207, Cys173–Cys186, and Cys197–Cys222. N-linked (GlcNAc...) asparagine glycosylation occurs at Asn45. Catalysis depends on His64, which acts as the Charge relay system. N-linked (GlcNAc...) asparagine glycosylation is present at Asn102. The Charge relay system role is filled by Asp109. N-linked (GlcNAc...) asparagine glycosylation occurs at Asn153. The active-site Charge relay system is the Ser201.

Belongs to the peptidase S1 family. Snake venom subfamily. In terms of assembly, monomer. As to expression, expressed by the venom gland.

The protein resides in the secreted. In terms of biological role, snake venom serine protease that selectively cleaves the heavy chain of protein C (PROC). This activation is thrombomodulin-independent. This Agkistrodon piscivorus leucostoma (Western cottonmouth) protein is Protein C activator.